Reading from the N-terminus, the 557-residue chain is Probable transcription factor sol4 (557 aa).

Residues I26 to C186 are fungal transcription factor domain. Positions S463 to H490 are disordered. Residues S472–S485 show a composition bias toward low complexity.

It localises to the nucleus. Probable transcription factor that regulates the expression of the gene cluster that mediates the biosynthesis of the phytotoxin solanapyrone, a causal agent of early blight disease of potato and tomato. The protein is Probable transcription factor sol4 (sol4) of Alternaria solani.